We begin with the raw amino-acid sequence, 210 residues long: Redox-sensing transcriptional repressor Rex (210 aa).

Residues 16–55 constitute a DNA-binding region (H-T-H motif); it reads IYSRFLKRLDKKGITTVSSGDIAEGVGVSPAQVRKDLAYF. Residue 90–95 coordinates NAD(+); that stretch reads GAGNLG.

It belongs to the transcriptional regulatory Rex family. Homodimer.

It is found in the cytoplasm. Its function is as follows. Modulates transcription in response to changes in cellular NADH/NAD(+) redox state. In Desulforamulus reducens (strain ATCC BAA-1160 / DSM 100696 / MI-1) (Desulfotomaculum reducens), this protein is Redox-sensing transcriptional repressor Rex.